The sequence spans 79 residues: Small ribosomal subunit protein bS16 (79 aa).

It belongs to the bacterial ribosomal protein bS16 family.

The sequence is that of Small ribosomal subunit protein bS16 from Desulfovibrio desulfuricans (strain ATCC 27774 / DSM 6949 / MB).